The primary structure comprises 295 residues: 33 kDa chaperonin (295 aa).

2 cysteine pairs are disulfide-bonded: C233/C235 and C267/C270.

It belongs to the HSP33 family. Under oxidizing conditions two disulfide bonds are formed involving the reactive cysteines. Under reducing conditions zinc is bound to the reactive cysteines and the protein is inactive.

The protein localises to the cytoplasm. In terms of biological role, redox regulated molecular chaperone. Protects both thermally unfolding and oxidatively damaged proteins from irreversible aggregation. Plays an important role in the bacterial defense system toward oxidative stress. The polypeptide is 33 kDa chaperonin (Mannheimia succiniciproducens (strain KCTC 0769BP / MBEL55E)).